The sequence spans 237 residues: Uridylate kinase (237 aa).

12 to 15 (KLSG) provides a ligand contact to ATP. The interval 20–25 (GEDGLG) is involved in allosteric activation by GTP. UMP is bound at residue G54. 2 residues coordinate ATP: G55 and R59. UMP-binding positions include D74 and 135-142 (TGNPFFTT). Positions 162, 168, and 171 each coordinate ATP.

This sequence belongs to the UMP kinase family. Homohexamer.

It is found in the cytoplasm. It carries out the reaction UMP + ATP = UDP + ADP. It functions in the pathway pyrimidine metabolism; CTP biosynthesis via de novo pathway; UDP from UMP (UMPK route): step 1/1. Allosterically activated by GTP. Inhibited by UTP. Its function is as follows. Catalyzes the reversible phosphorylation of UMP to UDP. The polypeptide is Uridylate kinase (pyrH) (Haemophilus influenzae (strain ATCC 51907 / DSM 11121 / KW20 / Rd)).